A 732-amino-acid polypeptide reads, in one-letter code: Coagulation factor XIII A chain (732 aa).

Residues 1–27 (MSETSRTAFGGRRAVPPNNSNAAEDDL) are disordered. At S2 the chain carries N-acetylserine. Positions 2-38 (SETSRTAFGGRRAVPPNNSNAAEDDLPTVELQGVVPR) are cleaved as a propeptide — activation peptide. Catalysis depends on residues C315, H374, and D397. Ca(2+) contacts are provided by N437, D439, E486, and E491. N-linked (GlcNAc...) asparagine glycosylation is present at N614.

Belongs to the transglutaminase superfamily. Transglutaminase family. As to quaternary structure, tetramer of two A chains (F13A1) and two B (F13B) chains. It depends on Ca(2+) as a cofactor. The activation peptide is released by thrombin.

Its subcellular location is the cytoplasm. The protein resides in the secreted. The enzyme catalyses L-glutaminyl-[protein] + L-lysyl-[protein] = [protein]-L-lysyl-N(6)-5-L-glutamyl-[protein] + NH4(+). Factor XIII is activated by thrombin and calcium ion to a transglutaminase that catalyzes the formation of gamma-glutamyl-epsilon-lysine cross-links between fibrin chains, thus stabilizing the fibrin clot. Also cross-link alpha-2-plasmin inhibitor, or fibronectin, to the alpha chains of fibrin. The polypeptide is Coagulation factor XIII A chain (F13A1) (Homo sapiens (Human)).